Here is a 350-residue protein sequence, read N- to C-terminus: GTPase Obg (350 aa).

The Obg domain occupies M1–I175. The OBG-type G domain maps to A176–G345. Residues G182–S189, F207–Q211, D229–G232, N299–D302, and S326–L328 each bind GTP. 2 residues coordinate Mg(2+): S189 and T209.

Belongs to the TRAFAC class OBG-HflX-like GTPase superfamily. OBG GTPase family. Monomer. Requires Mg(2+) as cofactor.

Its subcellular location is the cytoplasm. An essential GTPase which binds GTP, GDP and possibly (p)ppGpp with moderate affinity, with high nucleotide exchange rates and a fairly low GTP hydrolysis rate. Plays a role in control of the cell cycle, stress response, ribosome biogenesis and in those bacteria that undergo differentiation, in morphogenesis control. The protein is GTPase Obg of Akkermansia muciniphila (strain ATCC BAA-835 / DSM 22959 / JCM 33894 / BCRC 81048 / CCUG 64013 / CIP 107961 / Muc).